A 193-amino-acid chain; its full sequence is Acyl-homoserine-lactone synthase (193 aa).

It belongs to the autoinducer synthase family.

The catalysed reaction is a fatty acyl-[ACP] + S-adenosyl-L-methionine = an N-acyl-L-homoserine lactone + S-methyl-5'-thioadenosine + holo-[ACP] + H(+). Functionally, required for the synthesis of OHHL (N-(3-oxohexanoyl)-L-homoserine lactone) also known as VAI or N-(beta-ketocaproyl)homoserine lactone or 3-oxo-N-(tetrahydro-2-oxo-3-furanyl)-hexanamide, an autoinducer molecule which binds to LuxR and thus acts in bioluminescence regulation. This is Acyl-homoserine-lactone synthase (luxI) from Aliivibrio fischeri (Vibrio fischeri).